The sequence spans 286 residues: Bifunctional protein FolD (286 aa).

NADP(+)-binding positions include 167 to 169 and I233; that span reads GRS.

It belongs to the tetrahydrofolate dehydrogenase/cyclohydrolase family. In terms of assembly, homodimer.

It catalyses the reaction (6R)-5,10-methylene-5,6,7,8-tetrahydrofolate + NADP(+) = (6R)-5,10-methenyltetrahydrofolate + NADPH. The enzyme catalyses (6R)-5,10-methenyltetrahydrofolate + H2O = (6R)-10-formyltetrahydrofolate + H(+). The protein operates within one-carbon metabolism; tetrahydrofolate interconversion. In terms of biological role, catalyzes the oxidation of 5,10-methylenetetrahydrofolate to 5,10-methenyltetrahydrofolate and then the hydrolysis of 5,10-methenyltetrahydrofolate to 10-formyltetrahydrofolate. This Limosilactobacillus reuteri (strain DSM 20016) (Lactobacillus reuteri) protein is Bifunctional protein FolD.